Here is a 479-residue protein sequence, read N- to C-terminus: Ribulose bisphosphate carboxylase large chain (479 aa).

The propeptide occupies 1–2 (MS). Residues N123 and T173 each coordinate substrate. K175 (proton acceptor) is an active-site residue. K177 lines the substrate pocket. Residues K201, D203, and E204 each contribute to the Mg(2+) site. K201 bears the N6-carboxylysine mark. S208 is modified (phosphoserine). The active-site Proton acceptor is the H294. Substrate is bound by residues R295 and H327. T330 is subject to Phosphothreonine. Residue S379 participates in substrate binding.

This sequence belongs to the RuBisCO large chain family. Type I subfamily. Heterohexadecamer of 8 large chains and 8 small chains; disulfide-linked. The disulfide link is formed within the large subunit homodimers. Mg(2+) is required as a cofactor. Post-translationally, the disulfide bond which can form in the large chain dimeric partners within the hexadecamer appears to be associated with oxidative stress and protein turnover.

Its subcellular location is the plastid. The protein localises to the chloroplast. The catalysed reaction is 2 (2R)-3-phosphoglycerate + 2 H(+) = D-ribulose 1,5-bisphosphate + CO2 + H2O. It catalyses the reaction D-ribulose 1,5-bisphosphate + O2 = 2-phosphoglycolate + (2R)-3-phosphoglycerate + 2 H(+). RuBisCO catalyzes two reactions: the carboxylation of D-ribulose 1,5-bisphosphate, the primary event in carbon dioxide fixation, as well as the oxidative fragmentation of the pentose substrate in the photorespiration process. Both reactions occur simultaneously and in competition at the same active site. In Capsella bursa-pastoris (Shepherd's purse), this protein is Ribulose bisphosphate carboxylase large chain.